The following is a 177-amino-acid chain: Ribosome maturation factor RimP (177 aa).

Belongs to the RimP family.

It localises to the cytoplasm. Its function is as follows. Required for maturation of 30S ribosomal subunits. The protein is Ribosome maturation factor RimP of Mycobacterium marinum (strain ATCC BAA-535 / M).